The chain runs to 129 residues: Glycine cleavage system H protein (129 aa).

A Lipoyl-binding domain is found at 24–106 (TYTVGITEHA…YAGGWIFKIK (83 aa)). Lys65 is modified (N6-lipoyllysine).

Belongs to the GcvH family. In terms of assembly, the glycine cleavage system is composed of four proteins: P, T, L and H. (R)-lipoate is required as a cofactor.

In terms of biological role, the glycine cleavage system catalyzes the degradation of glycine. The H protein shuttles the methylamine group of glycine from the P protein to the T protein. The protein is Glycine cleavage system H protein of Escherichia coli O127:H6 (strain E2348/69 / EPEC).